The following is a 48-amino-acid chain: Cytochrome b559 subunit beta (48 aa).

A helical transmembrane segment spans residues 23–39 (WLAVHALAIPTVFFLGA). Residue His27 participates in heme binding.

The protein belongs to the PsbE/PsbF family. In terms of assembly, heterodimer of an alpha subunit and a beta subunit. PSII is composed of 1 copy each of membrane proteins PsbA, PsbB, PsbC, PsbD, PsbE, PsbF, PsbH, PsbI, PsbJ, PsbK, PsbL, PsbM, PsbT, PsbX, PsbY, Psb30/Ycf12, peripheral proteins PsbO, CyanoQ (PsbQ), PsbU, PsbV and a large number of cofactors. It forms dimeric complexes. Requires heme b as cofactor.

It localises to the cellular thylakoid membrane. This b-type cytochrome is tightly associated with the reaction center of photosystem II (PSII). PSII is a light-driven water:plastoquinone oxidoreductase that uses light energy to abstract electrons from H(2)O, generating O(2) and a proton gradient subsequently used for ATP formation. It consists of a core antenna complex that captures photons, and an electron transfer chain that converts photonic excitation into a charge separation. The sequence is that of Cytochrome b559 subunit beta from Prochlorococcus marinus (strain SARG / CCMP1375 / SS120).